The chain runs to 366 residues: Chorismate synthase (366 aa).

Residues arginine 48 and arginine 54 each coordinate NADP(+). FMN-binding positions include 125-127 (RSS), 238-239 (NA), glycine 278, 293-297 (KPTSS), and arginine 319.

This sequence belongs to the chorismate synthase family. In terms of assembly, homotetramer. FMNH2 serves as cofactor.

It carries out the reaction 5-O-(1-carboxyvinyl)-3-phosphoshikimate = chorismate + phosphate. Its pathway is metabolic intermediate biosynthesis; chorismate biosynthesis; chorismate from D-erythrose 4-phosphate and phosphoenolpyruvate: step 7/7. Catalyzes the anti-1,4-elimination of the C-3 phosphate and the C-6 proR hydrogen from 5-enolpyruvylshikimate-3-phosphate (EPSP) to yield chorismate, which is the branch point compound that serves as the starting substrate for the three terminal pathways of aromatic amino acid biosynthesis. This reaction introduces a second double bond into the aromatic ring system. In Burkholderia orbicola (strain MC0-3), this protein is Chorismate synthase.